We begin with the raw amino-acid sequence, 946 residues long: Increased sodium tolerance protein 2 (946 aa).

Over 1 to 121 (MSQTITSLDP…SNLTNNPKQS (121 aa)) the chain is Cytoplasmic. The chain crosses the membrane as a helical span at residues 122–142 (LYFAFLQNYIKWLIPFSFFGL). The Extracellular segment spans residues 143–153 (SIRFLSNFTYE). Residues 154–174 (FNSTYSLFAILWTLSFTAFWL) form a helical membrane-spanning segment. Residues 175 to 217 (YKYEPFWSDRLSKYSSFSTIEFLQDKQKAQKKASSVIMLKKCC) are Cytoplasmic-facing. Residues 218–238 (FIPVALLFGAILLSFQLYCFA) traverse the membrane as a helical segment. Over 239 to 253 (LEIFIKQIYNGPMIS) the chain is Extracellular. A helical membrane pass occupies residues 254-274 (ILSFLPTILICTFTPVLTVIY). The Cytoplasmic segment spans residues 275–302 (NKYFVEPMTKWENHSSVVNAKKSKEAKN). A helical transmembrane segment spans residues 303 to 323 (FVIIFLSSYVPLLITLFLYLP). At 324 to 447 (MGHLLTAEIR…DANFKKLLLQ (124 aa)) the chain is on the extracellular side. A helical transmembrane segment spans residues 448–468 (FGYLVMFSTIWPLAPFICLIV). Residues 469-505 (NLIVYQVDLRKAVLYSKPEYFPFPIYDKPSSVSNTQK) lie on the Cytoplasmic side of the membrane. The helical transmembrane segment at 506 to 526 (LTVGLWNSVLVMFSILGCVIT) threads the bilayer. The Extracellular portion of the chain corresponds to 527 to 563 (ATLTYMYQSCNIPGVGAHTSIHTNKAWYLANPINHSW). The chain crosses the membrane as a helical span at residues 564–584 (INIVLYAVFIEHVSVAIFFLF). The Cytoplasmic segment spans residues 585 to 946 (SSILKSSHDD…GLLHKLKKKL (362 aa)). Disordered regions lie at residues 617–638 (EKIPSPEFNSNNEKELVQRKGS) and 665–718 (THAN…TEKR). Residues 628 to 638 (NEKELVQRKGS) are compositionally biased toward basic and acidic residues. A Phosphoserine modification is found at Ser638. Low complexity predominate over residues 671-689 (PSSLSSASSPSLSSSSSSS). Thr701 is modified (phosphothreonine). Ser704 and Ser720 each carry phosphoserine. Position 726 is a phosphothreonine (Thr726). Phosphoserine is present on Ser729. The residue at position 730 (Tyr730) is a Phosphotyrosine. Ser757 bears the Phosphoserine mark. A disordered region spans residues 759–784 (RDAKSSAESSNATNNNTLGTESKLLP). The segment covering 764–775 (SAESSNATNNNT) has biased composition (low complexity). 3 positions are modified to phosphoserine: Ser793, Ser844, and Ser847. The segment at 846-946 (VSVATEQTKK…GLLHKLKKKL (101 aa)) is disordered. Thr850 bears the Phosphothreonine mark. Positions 859 to 868 (STKNGPSRSI) are enriched in polar residues. The span at 884-893 (TTTTTTTDAT) shows a compositional bias: low complexity. Positions 895–905 (PHHHHHHHRHR) are enriched in basic residues. The span at 916-927 (SKTTESSSSSSA) shows a compositional bias: low complexity. Positions 931 to 946 (KPKHKKGLLHKLKKKL) are enriched in basic residues.

As to quaternary structure, interacts with BTN2.

It localises to the cell membrane. Its function is as follows. May be involved in ion homeostasis together with BTN1 or BTN2. The protein is Increased sodium tolerance protein 2 (IST2) of Saccharomyces cerevisiae (strain ATCC 204508 / S288c) (Baker's yeast).